Reading from the N-terminus, the 165-residue chain is uncharacterized protein (165 aa).

The 152-residue stretch at 8–159 (LLVNYKTLEE…QGVQEQTTKP (152 aa)) folds into the N-acetyltransferase domain.

This is an uncharacterized protein from Shouchella clausii (strain KSM-K16) (Alkalihalobacillus clausii).